Here is a 217-residue protein sequence, read N- to C-terminus: 3-demethoxyubiquinol 3-hydroxylase (217 aa).

Residues Glu66, Glu96, His99, Glu148, Glu180, and His183 each coordinate Fe cation.

The protein belongs to the COQ7 family. It depends on Fe cation as a cofactor.

It is found in the cell membrane. It carries out the reaction a 5-methoxy-2-methyl-3-(all-trans-polyprenyl)benzene-1,4-diol + AH2 + O2 = a 3-demethylubiquinol + A + H2O. Its pathway is cofactor biosynthesis; ubiquinone biosynthesis. Catalyzes the hydroxylation of 2-nonaprenyl-3-methyl-6-methoxy-1,4-benzoquinol during ubiquinone biosynthesis. The polypeptide is 3-demethoxyubiquinol 3-hydroxylase (Xanthomonas oryzae pv. oryzae (strain MAFF 311018)).